We begin with the raw amino-acid sequence, 172 residues long: Trypsin inhibitor 1A (172 aa).

Disulfide bonds link Cys40–Cys84 and Cys133–Cys139.

This sequence belongs to the protease inhibitor I3 (leguminous Kunitz-type inhibitor) family.

In terms of biological role, WTI-1B inhibits trypsin stoichiometrically. The protein is Trypsin inhibitor 1A of Psophocarpus tetragonolobus (Winged bean).